The primary structure comprises 788 residues: Endonuclease MutS2 (788 aa).

Residue 332-339 (GPNTGGKT) participates in ATP binding. Residues 713-788 (VDLRGMDAEE…GTGVTVVEIK (76 aa)) enclose the Smr domain.

It belongs to the DNA mismatch repair MutS family. MutS2 subfamily. Homodimer. Binds to stalled ribosomes, contacting rRNA.

Endonuclease that is involved in the suppression of homologous recombination and thus may have a key role in the control of bacterial genetic diversity. Its function is as follows. Acts as a ribosome collision sensor, splitting the ribosome into its 2 subunits. Detects stalled/collided 70S ribosomes which it binds and splits by an ATP-hydrolysis driven conformational change. Acts upstream of the ribosome quality control system (RQC), a ribosome-associated complex that mediates the extraction of incompletely synthesized nascent chains from stalled ribosomes and their subsequent degradation. Probably generates substrates for RQC. This is Endonuclease MutS2 from Clostridium botulinum (strain Loch Maree / Type A3).